A 105-amino-acid polypeptide reads, in one-letter code: Small ribosomal subunit protein uS10 (105 aa).

Belongs to the universal ribosomal protein uS10 family. As to quaternary structure, part of the 30S ribosomal subunit.

In terms of biological role, involved in the binding of tRNA to the ribosomes. The chain is Small ribosomal subunit protein uS10 from Thermus thermophilus (strain ATCC BAA-163 / DSM 7039 / HB27).